Reading from the N-terminus, the 197-residue chain is Small ribosomal subunit protein uS4B (197 aa).

The S4 RNA-binding domain maps to 88 to 150 (SRLDNMVYRM…SRKTEMFVNN (63 aa)).

The protein belongs to the universal ribosomal protein uS4 family. As to quaternary structure, part of the 30S ribosomal subunit. Contacts protein S5. The interaction surface between S4 and S5 is involved in control of translational fidelity.

Its function is as follows. One of the primary rRNA binding proteins, it binds directly to 16S rRNA where it nucleates assembly of the body of the 30S subunit. Functionally, with S5 and S12 plays an important role in translational accuracy. The protein is Small ribosomal subunit protein uS4B of Clostridium perfringens (strain SM101 / Type A).